Here is a 372-residue protein sequence, read N- to C-terminus: N-methyl-L-tryptophan oxidase (372 aa).

4-34 (DLIIIGSGSVGAAAGYYATRAGLNVLMTDAH) lines the FAD pocket. Cys-308 carries the post-translational modification S-8alpha-FAD cysteine.

Belongs to the MSOX/MTOX family. MTOX subfamily. As to quaternary structure, monomer. FAD serves as cofactor.

The enzyme catalyses N(alpha)-methyl-L-tryptophan + O2 + H2O = L-tryptophan + formaldehyde + H2O2. In terms of biological role, catalyzes the oxidative demethylation of N-methyl-L-tryptophan. The sequence is that of N-methyl-L-tryptophan oxidase from Escherichia coli O81 (strain ED1a).